Reading from the N-terminus, the 317-residue chain is Integrin-binding sialoprotein (317 aa).

An N-terminal signal peptide occupies residues 1–16 (MKTALILLSILGMACA). 6 positions are modified to phosphoserine: Ser31, Ser67, Ser74, Ser75, Ser94, and Ser100. Residues 58-254 (FPVQGSSDSS…RTTSPPFGKT (197 aa)) form a disordered region. The segment covering 66–102 (SSEENGDDSSEEEEEEEETSNEGENNEESNEDEDSEA) has biased composition (acidic residues). N-linked (GlcNAc...) asparagine glycosylation is present at Asn104. Residues Thr119 and Thr122 are each glycosylated (O-linked (GalNAc...) threonine). Residue Ser149 is modified to Phosphoserine. A compositionally biased stretch (acidic residues) spans 149–173 (SDEEEEEEEEGNENEESEAEVDENE). Asn177, Asn182, and Asn190 each carry an N-linked (GlcNAc...) asparagine glycan. Residues 222–232 (KGTSKTTTSPN) are compositionally biased toward polar residues. Thr227, Thr228, Thr229, Thr238, and Thr239 each carry an O-linked (GalNAc...) threonine glycan. Residue Ser280 is modified to Phosphoserine. Residues 286-288 (RGD) carry the Integrin-binding motif motif. Tyr313 and Tyr314 each carry sulfotyrosine.

In terms of assembly, monomer. Interacts with integrins; the interaction promotes cell adhesion. Post-translationally, N-glycosylated; glycans consist of sialylated and core-fucosylated bi-, tri- and tetraantennary chains. O-glycosylated at eight sites; mucin-type glycans contain Gal, GlcNAc, GalNAc and terminal NeuAc. In terms of tissue distribution, expressed in bone (at protein level). Expressed in trophoblast cells of placenta (at protein level). Expressed in brain.

The protein resides in the secreted. Functionally, binds tightly to hydroxyapatite. Appears to form an integral part of the mineralized matrix. Probably important to cell-matrix interaction. Promotes adhesion and migration of various cells via the alpha-V/beta-3 integrin receptor (ITGAV:ITGB3). The polypeptide is Integrin-binding sialoprotein (IBSP) (Homo sapiens (Human)).